A 157-amino-acid polypeptide reads, in one-letter code: NADPH-dependent 7-cyano-7-deazaguanine reductase (157 aa).

Cys56 serves as the catalytic Thioimide intermediate. Asp63 acts as the Proton donor in catalysis. Substrate contacts are provided by residues Val78–Ser80 and His97–Glu98.

It belongs to the GTP cyclohydrolase I family. QueF type 1 subfamily.

The protein localises to the cytoplasm. The catalysed reaction is 7-aminomethyl-7-carbaguanine + 2 NADP(+) = 7-cyano-7-deazaguanine + 2 NADPH + 3 H(+). The protein operates within tRNA modification; tRNA-queuosine biosynthesis. In terms of biological role, catalyzes the NADPH-dependent reduction of 7-cyano-7-deazaguanine (preQ0) to 7-aminomethyl-7-deazaguanine (preQ1). The polypeptide is NADPH-dependent 7-cyano-7-deazaguanine reductase (Parabacteroides distasonis (strain ATCC 8503 / DSM 20701 / CIP 104284 / JCM 5825 / NCTC 11152)).